A 201-amino-acid polypeptide reads, in one-letter code: ATP-dependent Clp protease proteolytic subunit (201 aa).

The Nucleophile role is filled by Ser-101. Residue His-126 is part of the active site.

This sequence belongs to the peptidase S14 family. Component of the chloroplastic Clp protease core complex.

It is found in the plastid. Its subcellular location is the chloroplast stroma. The catalysed reaction is Hydrolysis of proteins to small peptides in the presence of ATP and magnesium. alpha-casein is the usual test substrate. In the absence of ATP, only oligopeptides shorter than five residues are hydrolyzed (such as succinyl-Leu-Tyr-|-NHMec, and Leu-Tyr-Leu-|-Tyr-Trp, in which cleavage of the -Tyr-|-Leu- and -Tyr-|-Trp bonds also occurs).. Functionally, cleaves peptides in various proteins in a process that requires ATP hydrolysis. Has a chymotrypsin-like activity. Plays a major role in the degradation of misfolded proteins. This is ATP-dependent Clp protease proteolytic subunit from Staurastrum punctulatum (Green alga).